The sequence spans 260 residues: Granzyme A (260 aa).

The first 26 residues, 1–26 (MRNASGPRGPSLATLLFLLLIPEGGC), serve as a signal peptide directing secretion. Positions 27-28 (ER) are cleaved as a propeptide — activation peptide. The 229-residue stretch at 29-257 (IIGGDTVVPH…HLNWIKKIMK (229 aa)) folds into the Peptidase S1 domain. Cysteine 54 and cysteine 70 are joined by a disulfide. Residues histidine 69 and aspartate 113 each act as charge relay system in the active site. 3 cysteine pairs are disulfide-bonded: cysteine 147-cysteine 217, cysteine 178-cysteine 196, and cysteine 207-cysteine 232. N-linked (GlcNAc...) asparagine glycosylation is found at asparagine 157 and asparagine 169. The active-site Charge relay system is the serine 211.

The protein belongs to the peptidase S1 family. Granzyme subfamily. Homodimer; disulfide-linked. Interacts with APEX1. Found in cytotoxic lymphocytes and in normal lymphoid tissues such as thymus and spleen. In terms of tissue distribution, more abundant in lymphoid tissues than isoform HF2.

The protein localises to the secreted. It localises to the cytoplasmic granule. The enzyme catalyses Hydrolysis of proteins, including fibronectin, type IV collagen and nucleolin. Preferential cleavage: -Arg-|-Xaa-, -Lys-|-Xaa- &gt;&gt; -Phe-|-Xaa- in small molecule substrates.. Functionally, abundant protease in the cytosolic granules of cytotoxic T-cells and NK-cells which activates caspase-independent pyroptosis when delivered into the target cell through the immunological synapse. It cleaves after Lys or Arg. Cleaves APEX1 after 'Lys-31' and destroys its oxidative repair activity. Cleaves the nucleosome assembly protein SET after 'Lys-189', which disrupts its nucleosome assembly activity and allows the SET complex to translocate into the nucleus to nick and degrade the DNA. The chain is Granzyme A (Gzma) from Mus musculus (Mouse).